A 574-amino-acid chain; its full sequence is MKQDFKVYVRLLSYLKPYWGIALLVLVGFGINAATEVSVAKLLKYIIDAIQEGSRADLDWFPLLIVLLVFFRGLGLFMGGYYTAVISRRLIFSIRQEIYAKLIRLPSQYYLDNSSGHISAKIMYNVEQLTAASSESLKIMVKDGLITLGLLGYLLYTNWRLTLCIFIFMPIIGVLVRKASKRMRKLSIQVQNTMGDVNHVVQESIGGQAVVKSFVGEEFEQKRFYKSSEDNLKRGLKMVIVQNLNSPLVQLVMAMAMSLIVWLALRPQILGETTAGEFVAYITAAGLLAKPIKNLTDVNEKLQRGIAAAYSVFELLDLPSEENHGTQTPKLQGDVRFDHVTLEYAGQVKAIKDFNLTIEPGETVAIVGRSGAGKTSLVNLLVRFQEVTSGSLYLDHIPIQDIELSCLRQQVAMVNQQVVLFNRSVRENIAYGQLEGAAEADIVAAAKAAYAHDFIMNLPQGYDTILGAQGLNLSGGQRQRIAIARAILKNAPILILDEATSALDNESEHFIQKAFDEAMQNRTTIVIAHRLSTIENADRIVVMDKGQIIEQGTHQELLLKQGAYFQLHQRNFEE.

4 helical membrane passes run 11–31 (LLSY…GFGI), 60–80 (WFPL…FMGG), 156–176 (YTNW…GVLV), and 244–264 (LNSP…VWLA). The 282-residue stretch at 23–304 (LLVLVGFGIN…LTDVNEKLQR (282 aa)) folds into the ABC transmembrane type-1 domain. One can recognise an ABC transporter domain in the interval 335 to 570 (VRFDHVTLEY…QGAYFQLHQR (236 aa)). Position 368 to 375 (368 to 375 (GRSGAGKT)) interacts with ATP.

Belongs to the ABC transporter superfamily. Lipid exporter (TC 3.A.1.106) family. Homodimer.

Its subcellular location is the cell inner membrane. It catalyses the reaction ATP + H2O + lipid A-core oligosaccharideSide 1 = ADP + phosphate + lipid A-core oligosaccharideSide 2.. Its function is as follows. Involved in lipopolysaccharide (LPS) biosynthesis. Translocates lipid A-core from the inner to the outer leaflet of the inner membrane. Transmembrane domains (TMD) form a pore in the inner membrane and the ATP-binding domain (NBD) is responsible for energy generation. This chain is ATP-dependent lipid A-core flippase, found in Acinetobacter baylyi (strain ATCC 33305 / BD413 / ADP1).